We begin with the raw amino-acid sequence, 92 residues long: Protein EMB-1 (92 aa).

Basic and acidic residues-rich tracts occupy residues M1–Q16, A37–R61, and G72–K92. The segment at M1–K92 is disordered.

The protein belongs to the small hydrophilic plant seed protein family. In terms of tissue distribution, expressed in embryogenic cells, somatic embryos and seeds at the later stages of development. In the embryos, expressed in the procambium, the root and shoot meristem and the protoderm of the cotyledons. Not detected in the endosperm or the aleurone layer, in young leaves or roots.

It localises to the nucleus. The polypeptide is Protein EMB-1 (Daucus carota (Wild carrot)).